The primary structure comprises 456 residues: Senecionine N-oxygenase (456 aa).

The signal sequence occupies residues 1–22 (MFRKFVIMLVLSLLVAAGISQA). Residue 32-37 (GAGYSG) participates in FAD binding. Residue 215–220 (GAGPSG) participates in NADP(+) binding.

Belongs to the FMO family. As to quaternary structure, homotetramer. FAD is required as a cofactor. As to expression, hemolymph.

The protein resides in the secreted. It catalyses the reaction senecionine + NADPH + O2 = senecionine N-oxide + NADP(+) + H2O. Functionally, NADPH-dependent monooxygenase that detoxifies senecionine and similar plant alkaloids that are ingested by the larvae. Is active towards a narrow range of related substrates with highest activity towards senecionine, followed by seneciphylline, retrorsine, monocrotaline, senecivernine, axillarine and axillaridine. The chain is Senecionine N-oxygenase (sno1) from Tyria jacobaeae (Cinnabar moth).